The chain runs to 433 residues: N-lysine methyltransferase SMYD2 (433 aa).

In terms of domain architecture, SET spans 7–241; the sequence is GGLERFCSPG…PGEEVFTSYI (235 aa). Residue 17–19 coordinates S-adenosyl-L-methionine; it reads KGR. Zn(2+) contacts are provided by cysteine 52, cysteine 55, cysteine 65, cysteine 68, cysteine 74, cysteine 78, histidine 86, and cysteine 90. Residues 52-90 form an MYND-type zinc finger; that stretch reads CEYCFTRKEGLSKCGRCKQAFYCNVECQKEDWPMHKLEC. Residues histidine 137, 206–207, and 258–260 contribute to the S-adenosyl-L-methionine site; these read NH and YFF. Position 283 is a phosphoserine (serine 283).

Belongs to the class V-like SAM-binding methyltransferase superfamily. In terms of assembly, interacts with RNA polymerase II and HELZ. Interacts with SIN3A and HDAC1. Interacts (via MYND-type zinc finger) with EPB41L3. Interacts (via SET domain) with p53/TP53. Interacts with RB1 and HSP90AA1.

It is found in the cytoplasm. The protein localises to the cytosol. It localises to the nucleus. The enzyme catalyses L-lysyl(4)-[histone H3] + 3 S-adenosyl-L-methionine = N(6),N(6),N(6)-trimethyl-L-lysyl(4)-[histone H3] + 3 S-adenosyl-L-homocysteine + 3 H(+). The catalysed reaction is L-lysyl-[protein] + S-adenosyl-L-methionine = N(6)-methyl-L-lysyl-[protein] + S-adenosyl-L-homocysteine + H(+). Its function is as follows. Protein-lysine N-methyltransferase that methylates both histones and non-histone proteins, including p53/TP53 and RB1. Specifically trimethylates histone H3 'Lys-4' (H3K4me3) in vivo. The activity requires interaction with HSP90alpha. Shows even higher methyltransferase activity on p53/TP53. Monomethylates 'Lys-370' of p53/TP53, leading to decreased DNA-binding activity and subsequent transcriptional regulation activity of p53/TP53. Monomethylates RB1 at 'Lys-860'. The protein is N-lysine methyltransferase SMYD2 (SMYD2) of Homo sapiens (Human).